We begin with the raw amino-acid sequence, 664 residues long: DNA ligase (664 aa).

NAD(+) is bound by residues 32 to 36 (DKEYD) and 80 to 81 (SL). Lys122 serves as the catalytic N6-AMP-lysine intermediate. NAD(+) contacts are provided by Arg144, Glu178, and Lys314. Zn(2+) is bound by residues Cys407, Cys410, Cys423, and Cys429. In terms of domain architecture, BRCT spans 587-664 (IDENPFMDKT…NEEEFSNKIK (78 aa)).

This sequence belongs to the NAD-dependent DNA ligase family. LigA subfamily. Mg(2+) is required as a cofactor. The cofactor is Mn(2+).

The enzyme catalyses NAD(+) + (deoxyribonucleotide)n-3'-hydroxyl + 5'-phospho-(deoxyribonucleotide)m = (deoxyribonucleotide)n+m + AMP + beta-nicotinamide D-nucleotide.. DNA ligase that catalyzes the formation of phosphodiester linkages between 5'-phosphoryl and 3'-hydroxyl groups in double-stranded DNA using NAD as a coenzyme and as the energy source for the reaction. It is essential for DNA replication and repair of damaged DNA. This chain is DNA ligase, found in Clostridium botulinum (strain ATCC 19397 / Type A).